A 307-amino-acid polypeptide reads, in one-letter code: Small ribosomal subunit biogenesis GTPase RsgA (307 aa).

In terms of domain architecture, CP-type G spans 85–242; that stretch reads RQDAWKTKLI…LIDSPGLQEF (158 aa). Residues 135–138 and 184–192 contribute to the GTP site; these read NKAD and GQSGMGKST. The Zn(2+) site is built by Cys266, Cys271, His273, and Cys279.

The protein belongs to the TRAFAC class YlqF/YawG GTPase family. RsgA subfamily. Monomer. Associates with 30S ribosomal subunit, binds 16S rRNA. Zn(2+) is required as a cofactor.

The protein localises to the cytoplasm. Its function is as follows. One of several proteins that assist in the late maturation steps of the functional core of the 30S ribosomal subunit. Helps release RbfA from mature subunits. May play a role in the assembly of ribosomal proteins into the subunit. Circularly permuted GTPase that catalyzes slow GTP hydrolysis, GTPase activity is stimulated by the 30S ribosomal subunit. This is Small ribosomal subunit biogenesis GTPase RsgA from Neisseria meningitidis serogroup C (strain 053442).